Consider the following 191-residue polypeptide: Putative inactive glutathione hydrolase 4 (191 aa).

Threonine 54 serves as the catalytic Nucleophile. L-glutamate-binding positions include threonine 72, asparagine 74, glutamate 93, aspartate 96, serine 126–serine 127, and glycine 147–glycine 148.

It belongs to the gamma-glutamyltransferase family. In terms of tissue distribution, expressed at low levels in embryo, roots and leaves. In mature plants, expression is restricted to vascular tissues of roots, leaves, flowers and siliques.

The polypeptide is Putative inactive glutathione hydrolase 4 (GGT4) (Arabidopsis thaliana (Mouse-ear cress)).